The sequence spans 348 residues: Macrophage-capping protein (348 aa).

An N-acetylmethionine modification is found at Met1. A Gelsolin-like 1 repeat occupies 27–75 (EKLKPVPVAQENQGVFFSGDSYLVLHNGPEEVSHLHLWIGQQSSRDEQG). A Nuclear localization signal motif is present at residues 137–146 (KKLYQVKGKK). Gelsolin-like repeat units follow at residues 148 to 188 (IRAT…LERN) and 261 to 307 (MNLT…KERQ). The residue at position 337 (Ser337) is a Phosphoserine.

This sequence belongs to the villin/gelsolin family. As to quaternary structure, interacts with NUP62. Interacts with NUTF2 and RAN; involved in CAPG nuclear import. The N-terminus is blocked. As to expression, macrophages and macrophage-like cells.

It localises to the nucleus. It is found in the cytoplasm. The protein localises to the melanosome. Its subcellular location is the cell projection. The protein resides in the lamellipodium. It localises to the ruffle. Functionally, calcium-sensitive protein which reversibly blocks the barbed ends of actin filaments but does not sever preformed actin filaments. May play an important role in macrophage function. May play a role in regulating cytoplasmic and/or nuclear structures through potential interactions with actin. May bind DNA. The protein is Macrophage-capping protein (CAPG) of Homo sapiens (Human).